A 249-amino-acid polypeptide reads, in one-letter code: 5'-nucleotidase SurE (249 aa).

A divalent metal cation is bound by residues aspartate 8, aspartate 9, serine 39, and asparagine 91.

Belongs to the SurE nucleotidase family. A divalent metal cation serves as cofactor.

Its subcellular location is the cytoplasm. It carries out the reaction a ribonucleoside 5'-phosphate + H2O = a ribonucleoside + phosphate. Its function is as follows. Nucleotidase that shows phosphatase activity on nucleoside 5'-monophosphates. In Haemophilus influenzae (strain PittEE), this protein is 5'-nucleotidase SurE.